A 192-amino-acid chain; its full sequence is Probable chorismate pyruvate-lyase (192 aa).

Positions 85, 120, and 176 each coordinate substrate.

Belongs to the UbiC family.

It localises to the cytoplasm. The enzyme catalyses chorismate = 4-hydroxybenzoate + pyruvate. Its pathway is cofactor biosynthesis; ubiquinone biosynthesis. Removes the pyruvyl group from chorismate, with concomitant aromatization of the ring, to provide 4-hydroxybenzoate (4HB) for the ubiquinone pathway. This is Probable chorismate pyruvate-lyase from Pseudoalteromonas atlantica (strain T6c / ATCC BAA-1087).